Reading from the N-terminus, the 230-residue chain is Thymidylate kinase (230 aa).

Position 20-27 (20-27 (GGEGAGKS)) interacts with ATP.

The protein belongs to the thymidylate kinase family.

It carries out the reaction dTMP + ATP = dTDP + ADP. Phosphorylation of dTMP to form dTDP in both de novo and salvage pathways of dTTP synthesis. The protein is Thymidylate kinase of Rhodopseudomonas palustris (strain TIE-1).